The sequence spans 354 residues: Ferrochelatase (354 aa).

H204 and E306 together coordinate Fe cation.

The protein belongs to the ferrochelatase family.

It localises to the cytoplasm. The enzyme catalyses heme b + 2 H(+) = protoporphyrin IX + Fe(2+). The protein operates within porphyrin-containing compound metabolism; protoheme biosynthesis; protoheme from protoporphyrin-IX: step 1/1. Catalyzes the ferrous insertion into protoporphyrin IX. The chain is Ferrochelatase from Coxiella burnetii (strain CbuG_Q212) (Coxiella burnetii (strain Q212)).